A 480-amino-acid polypeptide reads, in one-letter code: Glycogen synthase (480 aa).

Lys15 lines the ADP-alpha-D-glucose pocket.

This sequence belongs to the glycosyltransferase 1 family. Bacterial/plant glycogen synthase subfamily.

The catalysed reaction is [(1-&gt;4)-alpha-D-glucosyl](n) + ADP-alpha-D-glucose = [(1-&gt;4)-alpha-D-glucosyl](n+1) + ADP + H(+). It participates in glycan biosynthesis; glycogen biosynthesis. In terms of biological role, synthesizes alpha-1,4-glucan chains using ADP-glucose. The protein is Glycogen synthase of Rhizobium rhizogenes (strain K84 / ATCC BAA-868) (Agrobacterium radiobacter).